The primary structure comprises 502 residues: MKIFLVILSVFFFNGCFGLAYKTPISNPPISYDPYTTTIGSLYAKNLKENPKHSAAILLEDGFDALLHRVGLIRMSQKSIDMQTYIYKNDLSSQVIAKELLNAANRGVKVRILLDDNGLDSDFSDIMLLNFHKNIEVKIFNPYYIRNKGLRYFEMLADYERIKKRMHNKLFIVDNFAVIIGGRNIGDNYFDNDLDTNFLDLDALFFGGVASKAKESFENYWRFHRSIPVSLLRTHKRLKNNVKEIAKLHEKIPISAEDANEFEKKVNDFIERFQKYQYPIYYGNAIFLADLPAKIDTPLYSPIKIAFEKALKNAKDSVFIASSYFIPGKKIMKIFKNQISKGIELNILTNSLSSTDAIVVYGAWERYRNKLVRMGANVYEIRNDFFNRQIKGRFSTKHSLHGKTIVFDDALTLLGSFNIDPRSAYINTESAVLFDNPSFAKRVRLSLKDHAQQSWHLVLYRHRVIWEATEEGILIHEKNSPDTSFFLRLIKEWSKVLPEREL.

The helical transmembrane segment at 1–21 threads the bilayer; sequence MKIFLVILSVFFFNGCFGLAY. PLD phosphodiesterase domains follow at residues 162–189 and 396–423; these read IKKR…GDNY and TKHS…DPRS.

It belongs to the phospholipase D family. Cardiolipin synthase subfamily.

Its subcellular location is the cell membrane. This is an uncharacterized protein from Helicobacter pylori (strain J99 / ATCC 700824) (Campylobacter pylori J99).